A 544-amino-acid polypeptide reads, in one-letter code: Chaperonin GroEL (544 aa).

ATP is bound by residues 30–33, lysine 51, 87–91, glycine 415, 479–481, and aspartate 495; these read TLGP, DGTTT, and NAA.

Belongs to the chaperonin (HSP60) family. Forms a cylinder of 14 subunits composed of two heptameric rings stacked back-to-back. Interacts with the co-chaperonin GroES.

It localises to the cytoplasm. It carries out the reaction ATP + H2O + a folded polypeptide = ADP + phosphate + an unfolded polypeptide.. Functionally, together with its co-chaperonin GroES, plays an essential role in assisting protein folding. The GroEL-GroES system forms a nano-cage that allows encapsulation of the non-native substrate proteins and provides a physical environment optimized to promote and accelerate protein folding. This is Chaperonin GroEL from Francisella tularensis subsp. holarctica (strain FTNF002-00 / FTA).